The sequence spans 385 residues: UPF0744 protein YSD83 (385 aa).

Belongs to the UPF0744 family.

The sequence is that of UPF0744 protein YSD83 (YSD83) from Saccharomyces paradoxus (Yeast).